The primary structure comprises 87 residues: Small ribosomal subunit protein uS17 (87 aa).

This sequence belongs to the universal ribosomal protein uS17 family. As to quaternary structure, part of the 30S ribosomal subunit.

In terms of biological role, one of the primary rRNA binding proteins, it binds specifically to the 5'-end of 16S ribosomal RNA. This Staphylococcus aureus (strain Mu3 / ATCC 700698) protein is Small ribosomal subunit protein uS17.